A 940-amino-acid polypeptide reads, in one-letter code: Fibronectin-binding protein B (940 aa).

The first 36 residues, 1–36 (MKSNLRYGIRKHKLGAASVFLGTMIVVGMGQEKEAA), serve as a signal peptide directing secretion. Residues 36–111 (AASEQNNTTV…PKVETSRVDL (76 aa)) are disordered. Residues 38–92 (SEQNNTTVEESGSSATESKASETQTTTNNVNTIDETQSYSATSTEQPSQSTQVTT) show a composition bias toward polar residues. Positions 162-480 (TGTDVTNKVE…AQGDGKDKLK (319 aa)) are fibrinogen/elastin/tropoelastin-binding. Disordered regions lie at residues 676 to 746 (LGYE…NIID), 764 to 878 (IIEE…GKVV), and 892 to 918 (VPTK…NGML). The stretch at 681–718 (GQNSGNQSFEEDTEEDKPKYEQGGNIVDIDFDSVPQIH) is one D-1 repeat. One copy of the D-2 repeat lies at 719–756 (GQNNGNQSFEEDTEKDKPKYEQGGNIIDIDFDSVPHIH). The D-3 repeat unit spans residues 757–795 (GFNKHTEIIEEDTNKDKPNYQFGGHNSVDFEEDTLPQVS). Basic and acidic residues predominate over residues 764–774 (IIEEDTNKDKP). Over residues 792-802 (PQVSGHNEGQQ) the composition is skewed to polar residues. Residues 796 to 814 (GHNEGQQTIEEDTTPPIVP) form a D-4; truncated repeat. Pro residues predominate over residues 811–860 (PIVPPTPPTPEVPSEPETPTPPTPEVPSEPETPTPPTPEVPTEPGKPIPP). WR repeat units lie at residues 815–828 (PTPP…EPET), 829–842 (PTPP…EPET), and 857–870 (PIPP…KPSK). The short motif at 904–908 (LPETG) is the LPXTG sorting signal element. Thr-907 is modified (pentaglycyl murein peptidoglycan amidated threonine). Residues 908-940 (GGEESTNNGMLFGGLFSILGLALLRRNKKNHKA) constitute a propeptide, removed by sortase.

In terms of assembly, interacts with host PLG; this interaction provides active plasmin on the surface of bacteria cells. Interacts with host histones.

It is found in the secreted. The protein resides in the cell wall. Multifunctional protein which promotes bacterial attachment to fibrinogen, elastin and fibronectin. Also promotes the accumulation phase and the primary attachment phase of biofilm formation. In addition, protects against the antimicrobial activity of histones. Mechanistically, captures histones and prevents them from reaching the bacterial membrane and simultaneously binds plasminogen, thereby promoting its conversion to plasmin to destroy the bound histones. The polypeptide is Fibronectin-binding protein B (Staphylococcus aureus (strain USA300)).